A 131-amino-acid polypeptide reads, in one-letter code: M-zodatoxin-Lt8m (131 aa).

A signal peptide spans 1 to 20 (MKYFVVALALVAAFACIAES). Residues 21–60 (KPAESEHELAEVEEENELADLEDAVWLEHLADLSDLEEAR) constitute a propeptide that is removed on maturation.

This sequence belongs to the cationic peptide 06 (cytoinsectotoxin) family. Expressed by the venom gland.

Its subcellular location is the secreted. In terms of biological role, insecticidal, cytolytic and antimicrobial peptide. Forms voltage-dependent, ion-permeable channels in membranes. At high concentration causes cell membrane lysis. The chain is M-zodatoxin-Lt8m (cit 1-13) from Lachesana tarabaevi (Spider).